Here is a 291-residue protein sequence, read N- to C-terminus: MAALQEKKSCSQRMEEFRHYCWNPDTGQMLGRTLSRWVWISLYYVAFYVVMTGLFALCIYVLMQTIDPYTPDYQDQLKSPGVTLRPDVYGEKGLEIHYNISDNRTWTSLTHTLRSFLAGYSPAAQVDNINCTSKTYFFQESFGAPNHTKFSCKFTADMLENCSGLTDPSFGFKEGKPCFIIKMNRIVRFLPSNSTPPRVDCTFLDMPHQALTPLQVEYYPPNGTFSLHYFPYYGKKAQPHYSNPLVAAKLLNVPTNTEVVVLCKILADHVTFDNPHDPYEGKVEFKLKIQK.

The Cytoplasmic portion of the chain corresponds to 1 to 36 (MAALQEKKSCSQRMEEFRHYCWNPDTGQMLGRTLSR). A helical; Signal-anchor for type II membrane protein transmembrane segment spans residues 37–57 (WVWISLYYVAFYVVMTGLFAL). Residues 58–291 (CIYVLMQTID…KVEFKLKIQK (234 aa)) lie on the Extracellular side of the membrane. N-linked (GlcNAc...) asparagine glycans are attached at residues Asn99, Asn103, Asn130, Asn146, and Asn161. Cys131 and Cys152 are disulfide-bonded. A disulfide bridge links Cys162 with Cys178. Residues Asn193 and Asn222 are each glycosylated (N-linked (GlcNAc...) asparagine). The immunoglobulin-like stretch occupies residues 194–291 (STPPRVDCTF…KVEFKLKIQK (98 aa)). Cys201 and Cys263 form a disulfide bridge.

The protein belongs to the X(+)/potassium ATPases subunit beta family. As to quaternary structure, the ATPase pump is composed of two subunits: alpha (catalytic) and beta (regulatory). Interacts with alpha subunit ATP12A; this interaction is required for the formation of a functionally active pump and targeting at the plasma membrane. Interacts (via N-terminus) with alpha subunit ATP4A (via the P-domain). N-glycosylation is necessary for assembly and functional expression of the pump at the plasma membrane.

The protein localises to the apical cell membrane. The protein resides in the cell membrane. Its function is as follows. The beta subunit of the gastric H(+)/K(+) ATPase pump which transports H(+) ions in exchange for K(+) ions across the apical membrane of parietal cells. Plays a structural and regulatory role in the assembly and membrane targeting of a functionally active pump. Within a transport cycle, the transfer of a H(+) ion across the membrane is coupled to ATP hydrolysis and is associated with a transient phosphorylation of the alpha subunit that shifts the pump conformation from inward-facing (E1) to outward-facing state (E2). Interacts with the phosphorylation domain of the alpha subunit and functions as a ratchet, stabilizing the lumenal-open E2 conformation and preventing the reverse reaction of the transport cycle. The sequence is that of Potassium-transporting ATPase subunit beta (ATP4B) from Oryctolagus cuniculus (Rabbit).